We begin with the raw amino-acid sequence, 217 residues long: Regulator of G-protein signaling 19 (217 aa).

Positions 1–29 are disordered; sequence MPTPHEAEKQITGPEEADRPPSMSSHDTA. A phosphoserine mark is found at Ser24 and Ser97. The RGS domain maps to 90–206; that stretch reads SFDKLMHSPA…LSSPTYRALL (117 aa). Residue Ser151 is modified to Phosphoserine; by MAPK1 and MAPK3. The segment at 207–217 is interaction with GIPC; the sequence is LQGPSQSSSEA.

Interacts with GIPC PDZ domain. Interacts with GNAO1. In terms of processing, fatty acylated. Heavily palmitoylated in the cysteine string motif. Phosphorylated, mainly on serine residues. As to expression, highest expression in lung. Placenta, liver and heart also express high levels of GAIP.

The protein localises to the membrane. Inhibits signal transduction by increasing the GTPase activity of G protein alpha subunits thereby driving them into their inactive GDP-bound form. Binds to G-alpha subfamily 1 members, with the order G(i)a3 &gt; G(i)a1 &gt; G(o)a &gt;&gt; G(z)a/G(i)a2. Activity on G(z)-alpha is inhibited by phosphorylation and palmitoylation of the G-protein. This Homo sapiens (Human) protein is Regulator of G-protein signaling 19 (RGS19).